The sequence spans 180 residues: Adenine phosphoribosyltransferase (180 aa).

Residue Ser-2 is modified to N-acetylserine. Residues Ser-4, Ser-15, and Ser-30 each carry the phosphoserine modification. Tyr-60 carries the post-translational modification Phosphotyrosine. Phosphoserine is present on Ser-66. Position 114 is an N6-acetyllysine (Lys-114). Position 135 is a phosphothreonine (Thr-135).

The protein belongs to the purine/pyrimidine phosphoribosyltransferase family. As to quaternary structure, homodimer.

Its subcellular location is the cytoplasm. The catalysed reaction is AMP + diphosphate = 5-phospho-alpha-D-ribose 1-diphosphate + adenine. It participates in purine metabolism; AMP biosynthesis via salvage pathway; AMP from adenine: step 1/1. In terms of biological role, catalyzes a salvage reaction resulting in the formation of AMP, that is energically less costly than de novo synthesis. This Mus pahari (Gairdner's shrew-mouse) protein is Adenine phosphoribosyltransferase.